The sequence spans 311 residues: Delta(1)-pyrroline-2-carboxylate reductase 2 (311 aa).

It belongs to the ornithine cyclodeaminase/mu-crystallin family.

It catalyses the reaction L-proline + NAD(+) = 1-pyrroline-2-carboxylate + NADH + H(+). It carries out the reaction L-proline + NADP(+) = 1-pyrroline-2-carboxylate + NADPH + H(+). In terms of biological role, catalyzes the reduction of Delta(1)-pyrroline-2-carboxylate (Pyr2C) to L-proline, using preferentially NADPH over NADH as the electron donor. May be involved in a degradation pathway that converts trans-3-hydroxy-L-proline (t3LHyp) to L-proline. This is Delta(1)-pyrroline-2-carboxylate reductase 2 from Burkholderia ambifaria (strain ATCC BAA-244 / DSM 16087 / CCUG 44356 / LMG 19182 / AMMD) (Burkholderia cepacia (strain AMMD)).